The sequence spans 941 residues: Bifunctional glutamine synthetase adenylyltransferase/adenylyl-removing enzyme (941 aa).

The interval 1-431 (MSSAPPFAAA…TFRNAFRLAG (431 aa)) is adenylyl removase. Positions 447-941 (NGHGMRPHAG…DGTIAQAEVK (495 aa)) are adenylyl transferase.

This sequence belongs to the GlnE family. Mg(2+) serves as cofactor.

It catalyses the reaction [glutamine synthetase]-O(4)-(5'-adenylyl)-L-tyrosine + phosphate = [glutamine synthetase]-L-tyrosine + ADP. The catalysed reaction is [glutamine synthetase]-L-tyrosine + ATP = [glutamine synthetase]-O(4)-(5'-adenylyl)-L-tyrosine + diphosphate. Functionally, involved in the regulation of glutamine synthetase GlnA, a key enzyme in the process to assimilate ammonia. When cellular nitrogen levels are high, the C-terminal adenylyl transferase (AT) inactivates GlnA by covalent transfer of an adenylyl group from ATP to specific tyrosine residue of GlnA, thus reducing its activity. Conversely, when nitrogen levels are low, the N-terminal adenylyl removase (AR) activates GlnA by removing the adenylyl group by phosphorolysis, increasing its activity. The regulatory region of GlnE binds the signal transduction protein PII (GlnB) which indicates the nitrogen status of the cell. This Bordetella bronchiseptica (strain ATCC BAA-588 / NCTC 13252 / RB50) (Alcaligenes bronchisepticus) protein is Bifunctional glutamine synthetase adenylyltransferase/adenylyl-removing enzyme.